Reading from the N-terminus, the 385-residue chain is MVKYISILGSTGSIGTSALDVVSAHPEHFKIVGLTANYNIELLEQQIKTFQPRIVSVATKELADTLRTRISTNTKITYGTDGLIAVATHPNSNLVLSSVVGVSGLLPTIEALKAKKDIAIANKETLVAAGHIVTELAKQNGCRLIPVDSEHSAIFQCLNGENNKEIDKLIVTASGGAFRDKTREEMKTLQAKDALKHPNWLMGAKLTIDSATLMNKGFEVMEARWLFDIPYEKIDVMIHKESIIHSLVEFIDGSVIAQLGAPDMRMPIQYAFHYPTRLPSSYEKLNLLEIGSLHFEKPDLEKFPCLQYAYECGKIGGTTPAVLNAANEIANALFLKNEIAFFDIEKTIYKTVEAHHNVKDPSLDAILEADQWARQYANQLLIKKS.

Residues T11, G12, S13, I14, N39, and N122 each contribute to the NADPH site. K123 contributes to the 1-deoxy-D-xylulose 5-phosphate binding site. E124 contacts NADPH. D148 lines the Mn(2+) pocket. Positions 149, 150, 174, and 197 each coordinate 1-deoxy-D-xylulose 5-phosphate. Position 150 (E150) interacts with Mn(2+). G203 is an NADPH binding site. Residues S210, N215, K216, and E219 each coordinate 1-deoxy-D-xylulose 5-phosphate. Residue E219 coordinates Mn(2+).

The protein belongs to the DXR family. It depends on Mg(2+) as a cofactor. The cofactor is Mn(2+).

It carries out the reaction 2-C-methyl-D-erythritol 4-phosphate + NADP(+) = 1-deoxy-D-xylulose 5-phosphate + NADPH + H(+). It functions in the pathway isoprenoid biosynthesis; isopentenyl diphosphate biosynthesis via DXP pathway; isopentenyl diphosphate from 1-deoxy-D-xylulose 5-phosphate: step 1/6. Its function is as follows. Catalyzes the NADPH-dependent rearrangement and reduction of 1-deoxy-D-xylulose-5-phosphate (DXP) to 2-C-methyl-D-erythritol 4-phosphate (MEP). This Bacillus thuringiensis subsp. konkukian (strain 97-27) protein is 1-deoxy-D-xylulose 5-phosphate reductoisomerase 1.